The sequence spans 295 residues: NAD kinase (295 aa).

Aspartate 72 functions as the Proton acceptor in the catalytic mechanism. NAD(+) is bound by residues 72–73 (DG), 146–147 (ND), arginine 157, lysine 174, aspartate 176, 187–192 (TAYALS), and glutamine 247.

Belongs to the NAD kinase family. A divalent metal cation is required as a cofactor.

The protein localises to the cytoplasm. The enzyme catalyses NAD(+) + ATP = ADP + NADP(+) + H(+). Involved in the regulation of the intracellular balance of NAD and NADP, and is a key enzyme in the biosynthesis of NADP. Catalyzes specifically the phosphorylation on 2'-hydroxyl of the adenosine moiety of NAD to yield NADP. The sequence is that of NAD kinase from Pseudomonas aeruginosa (strain LESB58).